Here is a 204-residue protein sequence, read N- to C-terminus: uncharacterized protein (204 aa).

A disordered region spans residues 47–108; the sequence is TDSSDDEGGA…EDSDEEGEGG (62 aa). Acidic residues predominate over residues 49–106; that stretch reads SSDDEGGASSGDEGEASSDDEGDASSDDEEEASSDGEGVVEDEETLDAEGEDSDEEGE.

The protein resides in the mitochondrion. This is an uncharacterized protein from Paramecium tetraurelia.